A 270-amino-acid polypeptide reads, in one-letter code: 4-hydroxy-tetrahydrodipicolinate reductase (270 aa).

Residues 11–16 (GAGGRM) and glutamate 37 each bind NAD(+). Position 38 (arginine 38) interacts with NADP(+). NAD(+)-binding positions include 101–103 (GTT) and 125–128 (APNM). The active-site Proton donor/acceptor is the histidine 158. Histidine 159 is a binding site for (S)-2,3,4,5-tetrahydrodipicolinate. Lysine 162 functions as the Proton donor in the catalytic mechanism. Position 168-169 (168-169 (GT)) interacts with (S)-2,3,4,5-tetrahydrodipicolinate.

Belongs to the DapB family.

Its subcellular location is the cytoplasm. It carries out the reaction (S)-2,3,4,5-tetrahydrodipicolinate + NAD(+) + H2O = (2S,4S)-4-hydroxy-2,3,4,5-tetrahydrodipicolinate + NADH + H(+). The catalysed reaction is (S)-2,3,4,5-tetrahydrodipicolinate + NADP(+) + H2O = (2S,4S)-4-hydroxy-2,3,4,5-tetrahydrodipicolinate + NADPH + H(+). It participates in amino-acid biosynthesis; L-lysine biosynthesis via DAP pathway; (S)-tetrahydrodipicolinate from L-aspartate: step 4/4. In terms of biological role, catalyzes the conversion of 4-hydroxy-tetrahydrodipicolinate (HTPA) to tetrahydrodipicolinate. The sequence is that of 4-hydroxy-tetrahydrodipicolinate reductase from Shewanella oneidensis (strain ATCC 700550 / JCM 31522 / CIP 106686 / LMG 19005 / NCIMB 14063 / MR-1).